The chain runs to 147 residues: MKIMVINGPNLNMLGIREKNIYGTFSYDDLCKYIKDYPEYKDKNIEFEFLQSNVEGEIVNFIQEAYSKKYDGIILNAGGYTHTSVAIHDAIKAVSIPTVEVHISNIHAREDFRKVCVTSPACIGQITGLGKLGYILAVVYLIEYYNK.

The Proton acceptor role is filled by tyrosine 22. Asparagine 76, histidine 82, and aspartate 89 together coordinate substrate. Histidine 102 (proton donor) is an active-site residue. Substrate is bound by residues 103–104 and arginine 113; that span reads IS.

This sequence belongs to the type-II 3-dehydroquinase family. As to quaternary structure, homododecamer.

It carries out the reaction 3-dehydroquinate = 3-dehydroshikimate + H2O. Its pathway is metabolic intermediate biosynthesis; chorismate biosynthesis; chorismate from D-erythrose 4-phosphate and phosphoenolpyruvate: step 3/7. Its function is as follows. Catalyzes a trans-dehydration via an enolate intermediate. The chain is 3-dehydroquinate dehydratase from Fusobacterium nucleatum subsp. nucleatum (strain ATCC 25586 / DSM 15643 / BCRC 10681 / CIP 101130 / JCM 8532 / KCTC 2640 / LMG 13131 / VPI 4355).